Reading from the N-terminus, the 428-residue chain is 3-phosphoshikimate 1-carboxyvinyltransferase (428 aa).

3-phosphoshikimate contacts are provided by lysine 23, serine 24, and arginine 28. Lysine 23 lines the phosphoenolpyruvate pocket. Phosphoenolpyruvate is bound by residues glycine 97 and arginine 125. Residues serine 170, serine 171, glutamine 172, serine 198, aspartate 314, asparagine 337, and lysine 341 each contribute to the 3-phosphoshikimate site. Position 172 (glutamine 172) interacts with phosphoenolpyruvate. Aspartate 314 serves as the catalytic Proton acceptor. The phosphoenolpyruvate site is built by arginine 345, arginine 387, and lysine 412.

Belongs to the EPSP synthase family. Monomer.

Its subcellular location is the cytoplasm. The catalysed reaction is 3-phosphoshikimate + phosphoenolpyruvate = 5-O-(1-carboxyvinyl)-3-phosphoshikimate + phosphate. It participates in metabolic intermediate biosynthesis; chorismate biosynthesis; chorismate from D-erythrose 4-phosphate and phosphoenolpyruvate: step 6/7. Functionally, catalyzes the transfer of the enolpyruvyl moiety of phosphoenolpyruvate (PEP) to the 5-hydroxyl of shikimate-3-phosphate (S3P) to produce enolpyruvyl shikimate-3-phosphate and inorganic phosphate. In Hamiltonella defensa subsp. Acyrthosiphon pisum (strain 5AT), this protein is 3-phosphoshikimate 1-carboxyvinyltransferase.